A 296-amino-acid polypeptide reads, in one-letter code: Arginase (296 aa).

Positions 97, 120, 122, and 124 each coordinate Mn(2+). Residues 122–126 (HGDLN), 133–135 (SGN), and D176 contribute to the substrate site. Residues D223 and D225 each coordinate Mn(2+). T237 and E268 together coordinate substrate.

Belongs to the arginase family. It depends on Mn(2+) as a cofactor.

It carries out the reaction L-arginine + H2O = urea + L-ornithine. It functions in the pathway nitrogen metabolism; urea cycle; L-ornithine and urea from L-arginine: step 1/1. Involved in the catabolism of arginine. This Bacillus subtilis (strain 168) protein is Arginase.